The following is a 116-amino-acid chain: Large ribosomal subunit protein bL19 (116 aa).

It belongs to the bacterial ribosomal protein bL19 family.

Its function is as follows. This protein is located at the 30S-50S ribosomal subunit interface and may play a role in the structure and function of the aminoacyl-tRNA binding site. This is Large ribosomal subunit protein bL19 from Roseiflexus castenholzii (strain DSM 13941 / HLO8).